A 332-amino-acid chain; its full sequence is Cell growth regulator with RING finger domain protein 1 (332 aa).

An RING-type zinc finger spans residues 274–309 (CVVCQNGGVNWVLLPCRHACLCDSCVRYFKQCPMCR).

The protein resides in the nucleus. It localises to the endoplasmic reticulum. Able to inhibit growth in several cell lines. The sequence is that of Cell growth regulator with RING finger domain protein 1 (Cgrrf1) from Mus musculus (Mouse).